The primary structure comprises 184 residues: ADP-ribosylation factor-like protein 2 (184 aa).

The N-myristoyl glycine moiety is linked to residue glycine 2. Residue 23-30 participates in GTP binding; that stretch reads GLDNAGKT. At serine 45 the chain carries Phosphoserine. Residues 66–70 and glycine 68 each bind GTP; that span reads DVGGQ. A Glycyl lysine isopeptide (Lys-Gly) (interchain with G-Cter in ubiquitin) cross-link involves residue lysine 71. Residue 125–128 coordinates GTP; sequence NKQD.

This sequence belongs to the small GTPase superfamily. Arf family. Found in a complex with ARL2, ARL2BP and SLC25A6. Found in a complex with at least ARL2, PPP2CB, PPP2R1A, PPP2R2A, PPP2R5E and TBCD. Found in a complex with ARL2, ARL2BP and SLC25A4. The GTP-bound form interacts with PDE6D. Interacts with ELMOD2. The GTP-bound form interacts with ARL2BP. Interacts, preferentially in its GDP-bound state, with TBCD. Interacts with UNC119. Post-translationally, not N-myristoylated.

The protein localises to the mitochondrion intermembrane space. It localises to the cytoplasm. The protein resides in the cytoskeleton. It is found in the microtubule organizing center. Its subcellular location is the centrosome. The protein localises to the nucleus. Functionally, small GTP-binding protein which cycles between an inactive GDP-bound and an active GTP-bound form, and the rate of cycling is regulated by guanine nucleotide exchange factors (GEF) and GTPase-activating proteins (GAP). GTP-binding protein that does not act as an allosteric activator of the cholera toxin catalytic subunit. Regulates formation of new microtubules and centrosome integrity. Prevents the TBCD-induced microtubule destruction. Participates in association with TBCD, in the disassembly of the apical junction complexes. Antagonizes the effect of TBCD on epithelial cell detachment and tight and adherens junctions disassembly. Together with ARL2, plays a role in the nuclear translocation, retention and transcriptional activity of STAT3. Component of a regulated secretory pathway involved in Ca(2+)-dependent release of acetylcholine. Required for normal progress through the cell cycle. Also regulates mitochondrial integrity and function. This is ADP-ribosylation factor-like protein 2 (ARL2) from Homo sapiens (Human).